The primary structure comprises 259 residues: Ubiquinone/menaquinone biosynthesis C-methyltransferase UbiE (259 aa).

Residues threonine 82, aspartate 103, and asparagine 131–alanine 132 contribute to the S-adenosyl-L-methionine site.

This sequence belongs to the class I-like SAM-binding methyltransferase superfamily. MenG/UbiE family.

It carries out the reaction a 2-demethylmenaquinol + S-adenosyl-L-methionine = a menaquinol + S-adenosyl-L-homocysteine + H(+). The catalysed reaction is a 2-methoxy-6-(all-trans-polyprenyl)benzene-1,4-diol + S-adenosyl-L-methionine = a 5-methoxy-2-methyl-3-(all-trans-polyprenyl)benzene-1,4-diol + S-adenosyl-L-homocysteine + H(+). The protein operates within quinol/quinone metabolism; menaquinone biosynthesis; menaquinol from 1,4-dihydroxy-2-naphthoate: step 2/2. It functions in the pathway cofactor biosynthesis; ubiquinone biosynthesis. Methyltransferase required for the conversion of demethylmenaquinol (DMKH2) to menaquinol (MKH2) and the conversion of 2-polyprenyl-6-methoxy-1,4-benzoquinol (DDMQH2) to 2-polyprenyl-3-methyl-6-methoxy-1,4-benzoquinol (DMQH2). This chain is Ubiquinone/menaquinone biosynthesis C-methyltransferase UbiE, found in Agrobacterium fabrum (strain C58 / ATCC 33970) (Agrobacterium tumefaciens (strain C58)).